Here is a 249-residue protein sequence, read N- to C-terminus: Glucosamine-6-phosphate deaminase 2 (249 aa).

The active-site Proton acceptor; for enolization step is Asp67. Residue Asn136 is the For ring-opening step of the active site. The active-site Proton acceptor; for ring-opening step is the His138. Residue Glu143 is the For ring-opening step of the active site.

Belongs to the glucosamine/galactosamine-6-phosphate isomerase family. NagB subfamily.

It carries out the reaction alpha-D-glucosamine 6-phosphate + H2O = beta-D-fructose 6-phosphate + NH4(+). The protein operates within amino-sugar metabolism; N-acetylneuraminate degradation; D-fructose 6-phosphate from N-acetylneuraminate: step 5/5. Functionally, catalyzes the reversible isomerization-deamination of glucosamine 6-phosphate (GlcN6P) to form fructose 6-phosphate (Fru6P) and ammonium ion. Required for growth on glucosamine and also provides the majority of GlcN6P deaminase activity during growth on N-acetylglucosamine (GlcNAc). In Bacillus subtilis (strain 168), this protein is Glucosamine-6-phosphate deaminase 2.